We begin with the raw amino-acid sequence, 227 residues long: Transmembrane emp24 domain-containing protein 4 (227 aa).

The N-terminal stretch at 1-29 (MAGVGAGPLRAMGRQALLLLALCATGAQG) is a signal peptide. At 30–194 (LYFHIGETEK…RLTSESTNQR (165 aa)) the chain is on the lumenal side. Residues 39 to 137 (KRCFIEEIPD…KLRVHLDIQV (99 aa)) form the GOLD domain. A glycan (N-linked (GlcNAc...) asparagine) is linked at asparagine 117. Positions 147 to 176 (IAAKDKLTELQLRARQLLDQVEQIQKEQDY) form a coiled coil. Residues 195–212 (VLWWSIAQTVILILTGIW) form a helical membrane-spanning segment. The Cytoplasmic portion of the chain corresponds to 213–227 (QMRHLKSFFEAKKLV). The short motif at 220-221 (FF) is the COPII vesicle coat-binding element. The short motif at 220–227 (FFEAKKLV) is the COPI vesicle coat-binding element.

This sequence belongs to the EMP24/GP25L family.

It localises to the endoplasmic reticulum membrane. Functionally, involved in vesicular protein trafficking, mainly in the early secretory pathway. targeting. Involved in the maintenance of the Golgi apparatus. Appears to play a role in the biosynthesis of secreted cargo including processing. Involved in endoplasmic reticulum stress response. May play a role in the regulation of heat-shock response and apoptosis. In Homo sapiens (Human), this protein is Transmembrane emp24 domain-containing protein 4 (TMED4).